We begin with the raw amino-acid sequence, 265 residues long: Orotidine 5'-phosphate decarboxylase (265 aa).

Residues Asp37, 59 to 61, 91 to 100, Tyr217, and Arg235 each bind substrate; these read KTH and DRKFADIGNT. Lys93 functions as the Proton donor in the catalytic mechanism.

It belongs to the OMP decarboxylase family.

It carries out the reaction orotidine 5'-phosphate + H(+) = UMP + CO2. Its pathway is pyrimidine metabolism; UMP biosynthesis via de novo pathway; UMP from orotate: step 2/2. The polypeptide is Orotidine 5'-phosphate decarboxylase (URA3) (Candida glabrata (strain ATCC 2001 / BCRC 20586 / JCM 3761 / NBRC 0622 / NRRL Y-65 / CBS 138) (Yeast)).